Here is a 90-residue protein sequence, read N- to C-terminus: MHLSLARSAVLILLLLFALGNFVGVQPGQITRDADHGINLRSLRKQMSRSPLVKGAFCGQACSSVKCPKKCFCHPEEKVCYREMRTKERD.

The first 20 residues, 1–20 (MHLSLARSAVLILLLLFALG), serve as a signal peptide directing secretion. A propeptide spanning residues 21-60 (NFVGVQPGQITRDADHGINLRSLRKQMSRSPLVKGAFCGQ) is cleaved from the precursor. 3 disulfide bridges follow: C58–C71, C62–C73, and C67–C80.

The protein belongs to the conotoxin P superfamily. In terms of tissue distribution, expressed by the venom duct.

It localises to the secreted. Its function is as follows. Probable neurotoxin that inhibits ion channels. The protein is Conotoxin Rg9.1 of Conus regius (Crown cone).